The sequence spans 149 residues: Large ribosomal subunit protein uL15 (149 aa).

The tract at residues 14–57 (KQRKRVGRGSGSGWGCTSGKGNKGQNARSGGGVRPGFEGGQMPL) is disordered. 2 stretches are compositionally biased toward gly residues: residues 21 to 35 (RGSGSGWGCTSGKGN) and 42 to 52 (SGGGVRPGFEG).

It belongs to the universal ribosomal protein uL15 family. In terms of assembly, part of the 50S ribosomal subunit.

In terms of biological role, binds to the 23S rRNA. The protein is Large ribosomal subunit protein uL15 of Oleidesulfovibrio alaskensis (strain ATCC BAA-1058 / DSM 17464 / G20) (Desulfovibrio alaskensis).